A 314-amino-acid polypeptide reads, in one-letter code: Glutathione synthetase (314 aa).

The 187-residue stretch at 125 to 311 folds into the ATP-grasp domain; the sequence is EKIAAQLFPQ…IAGQLFDAIE (187 aa). 151-208 contacts ATP; sequence FVQKQEQAILKPLDGMGGHSIFRSSNGDPNLNVILETLTDGGRTLAIAQRYLQQIIEG. 2 residues coordinate Mg(2+): glutamate 282 and asparagine 284.

It belongs to the prokaryotic GSH synthase family. Mg(2+) is required as a cofactor. The cofactor is Mn(2+).

It carries out the reaction gamma-L-glutamyl-L-cysteine + glycine + ATP = glutathione + ADP + phosphate + H(+). Its pathway is sulfur metabolism; glutathione biosynthesis; glutathione from L-cysteine and L-glutamate: step 2/2. The polypeptide is Glutathione synthetase (Xylella fastidiosa (strain Temecula1 / ATCC 700964)).